We begin with the raw amino-acid sequence, 429 residues long: Histidinol dehydrogenase (429 aa).

The NAD(+) site is built by Y127, Q188, and N211. Substrate is bound by residues S234, Q256, and H259. Q256 and H259 together coordinate Zn(2+). Active-site proton acceptor residues include E324 and H325. H325, D358, E412, and H417 together coordinate substrate. D358 lines the Zn(2+) pocket. Zn(2+) is bound at residue H417.

The protein belongs to the histidinol dehydrogenase family. The cofactor is Zn(2+).

The enzyme catalyses L-histidinol + 2 NAD(+) + H2O = L-histidine + 2 NADH + 3 H(+). It functions in the pathway amino-acid biosynthesis; L-histidine biosynthesis; L-histidine from 5-phospho-alpha-D-ribose 1-diphosphate: step 9/9. Catalyzes the sequential NAD-dependent oxidations of L-histidinol to L-histidinaldehyde and then to L-histidine. This chain is Histidinol dehydrogenase, found in Bacillus anthracis.